The following is a 305-amino-acid chain: Aspartate carbamoyltransferase catalytic subunit (305 aa).

Carbamoyl phosphate is bound by residues R56 and T57. K85 serves as a coordination point for L-aspartate. Residues R106, H134, and Q137 each contribute to the carbamoyl phosphate site. L-aspartate contacts are provided by R167 and R227. Positions 266 and 267 each coordinate carbamoyl phosphate.

Belongs to the aspartate/ornithine carbamoyltransferase superfamily. ATCase family. Heterooligomer of catalytic and regulatory chains.

The enzyme catalyses carbamoyl phosphate + L-aspartate = N-carbamoyl-L-aspartate + phosphate + H(+). Its pathway is pyrimidine metabolism; UMP biosynthesis via de novo pathway; (S)-dihydroorotate from bicarbonate: step 2/3. Functionally, catalyzes the condensation of carbamoyl phosphate and aspartate to form carbamoyl aspartate and inorganic phosphate, the committed step in the de novo pyrimidine nucleotide biosynthesis pathway. The polypeptide is Aspartate carbamoyltransferase catalytic subunit (Thermoplasma acidophilum (strain ATCC 25905 / DSM 1728 / JCM 9062 / NBRC 15155 / AMRC-C165)).